A 68-amino-acid chain; its full sequence is UPF0434 protein BURPS668_0926 (68 aa).

This sequence belongs to the UPF0434 family.

The protein is UPF0434 protein BURPS668_0926 of Burkholderia pseudomallei (strain 668).